Here is a 133-residue protein sequence, read N- to C-terminus: Small ribosomal subunit protein uS8 (133 aa).

It belongs to the universal ribosomal protein uS8 family. In terms of assembly, part of the 30S ribosomal subunit. Contacts proteins S5 and S12.

Its function is as follows. One of the primary rRNA binding proteins, it binds directly to 16S rRNA central domain where it helps coordinate assembly of the platform of the 30S subunit. The polypeptide is Small ribosomal subunit protein uS8 (Trichodesmium erythraeum (strain IMS101)).